We begin with the raw amino-acid sequence, 1450 residues long: Protein TIC 214 (1450 aa).

A run of 6 helical transmembrane segments spans residues 29–49, 61–81, 86–106, 132–152, 166–186, and 213–233; these read FGLY…IVVI, VMAF…IYYT, LFIK…FYWQ, FFDS…PIFF, LNFF…FFNA, and IIPI…HIPF.

This sequence belongs to the TIC214 family. In terms of assembly, part of the Tic complex.

It is found in the plastid. The protein localises to the chloroplast inner membrane. In terms of biological role, involved in protein precursor import into chloroplasts. May be part of an intermediate translocation complex acting as a protein-conducting channel at the inner envelope. This Chaetosphaeridium globosum (Charophycean green alga) protein is Protein TIC 214.